Here is a 2464-residue protein sequence, read N- to C-terminus: Nonribosomal peptide synthetase NPS2 (2464 aa).

The interval 275 to 670 (DDHHPGTSQP…GRIDTQIKLR (396 aa)) is adenylation 1. The 75-residue stretch at 814 to 888 (TKAEGQLLEI…QIAKALDASS (75 aa)) folds into the Carrier 1 domain. Ser-848 carries the O-(pantetheine 4'-phosphoryl)serine modification. A condensation 1 region spans residues 924–1325 (IYPPFPLQEG…EGLALDLAQG (402 aa)). Residues 1364–1437 (EDLLLRLRKI…RMAASAGKKI (74 aa)) form the Carrier 2 domain. Position 1398 is an O-(pantetheine 4'-phosphoryl)serine (Ser-1398). The condensation 2 stretch occupies residues 1479–1887 (DVFPVTTLQA…LRVLVDDLDA (409 aa)). A Carrier 3 domain is found at 1917-1993 (SSWDEKSSTL…DLVMRAGAED (77 aa)). Ser-1954 carries the post-translational modification O-(pantetheine 4'-phosphoryl)serine. The interval 2047–2340 (GGSRYQHVFG…ATQIQDDLRE (294 aa)) is condensation 3.

Belongs to the NRP synthetase family.

Its pathway is siderophore biosynthesis. Nonribosomal peptide synthetase; part of the siderophore basidioferrin biosynthetic pathway. The biosynthesis of basidioferrin depends on the hydroxylation of ornithine to N(5)-hydroxyornithine, catalyzed by the monooxygenase SMO1. The second step, the acylation of N(5)-hydroxy-L-ornithine is catalyzed by a not yet identified N-acyltransferase. Finally, assembly of basidioferrin is catalyzed by the nonribosomal peptide synthase (NRPS) NPS2 via amide bond formation between three L-AHO molecules to release the linear L-AHO trimer. N-5-acetyl-N-5-hydroxy-L-ornithine (L-AHO) and N-5-cis-anhydromevalonyl-N-5-hydroxy-L-ornithine (L-AMHO) are accepted as the substrates by the NPS2 adenylation (A) domain, but only L-AHO is trimerized. The polypeptide is Nonribosomal peptide synthetase NPS2 (Ceriporiopsis subvermispora (strain B) (White-rot fungus)).